The sequence spans 130 residues: Small ribosomal subunit protein uS8 (130 aa).

It belongs to the universal ribosomal protein uS8 family. In terms of assembly, component of the small ribosomal subunit (SSU). Mature N.crassa ribosomes consist of a small (40S) and a large (60S) subunit. The 40S small subunit contains 1 molecule of ribosomal RNA (18S rRNA) and at least 32 different proteins. The large 60S subunit contains 3 rRNA molecules (26S, 5.8S and 5S rRNA) and at least 42 different proteins.

It localises to the cytoplasm. Functionally, component of the ribosome, a large ribonucleoprotein complex responsible for the synthesis of proteins in the cell. The small ribosomal subunit (SSU) binds messenger RNAs (mRNAs) and translates the encoded message by selecting cognate aminoacyl-transfer RNA (tRNA) molecules. The large subunit (LSU) contains the ribosomal catalytic site termed the peptidyl transferase center (PTC), which catalyzes the formation of peptide bonds, thereby polymerizing the amino acids delivered by tRNAs into a polypeptide chain. The nascent polypeptides leave the ribosome through a tunnel in the LSU and interact with protein factors that function in enzymatic processing, targeting, and the membrane insertion of nascent chains at the exit of the ribosomal tunnel. In Neurospora crassa (strain ATCC 24698 / 74-OR23-1A / CBS 708.71 / DSM 1257 / FGSC 987), this protein is Small ribosomal subunit protein uS8 (crp-27).